The primary structure comprises 458 residues: Histidine--tRNA ligase (458 aa).

Belongs to the class-II aminoacyl-tRNA synthetase family. In terms of assembly, homodimer.

Its subcellular location is the cytoplasm. It catalyses the reaction tRNA(His) + L-histidine + ATP = L-histidyl-tRNA(His) + AMP + diphosphate + H(+). The polypeptide is Histidine--tRNA ligase (Azobacteroides pseudotrichonymphae genomovar. CFP2).